Reading from the N-terminus, the 503-residue chain is Maturase K (503 aa).

This sequence belongs to the intron maturase 2 family. MatK subfamily.

Its subcellular location is the plastid. The protein localises to the chloroplast. Usually encoded in the trnK tRNA gene intron. Probably assists in splicing its own and other chloroplast group II introns. In Stangeria eriopus (Natal grass cycad), this protein is Maturase K.